A 145-amino-acid polypeptide reads, in one-letter code: Large ribosomal subunit protein uL15 (145 aa).

The tract at residues 1 to 43 is disordered; that stretch reads MRLNTIKPGAGSKSAAKRVGRGIGSGLGKTCGRGHKGQKSRAG. The span at 21-31 shows a compositional bias: gly residues; it reads RGIGSGLGKTC.

It belongs to the universal ribosomal protein uL15 family. Part of the 50S ribosomal subunit.

In terms of biological role, binds to the 23S rRNA. This is Large ribosomal subunit protein uL15 from Aromatoleum aromaticum (strain DSM 19018 / LMG 30748 / EbN1) (Azoarcus sp. (strain EbN1)).